The primary structure comprises 246 residues: uncharacterized protein (246 aa).

The residue at position 194 (Ser194) is a Phosphoserine.

This is an uncharacterized protein from Schizosaccharomyces pombe (strain 972 / ATCC 24843) (Fission yeast).